Here is a 681-residue protein sequence, read N- to C-terminus: DNA ligase (681 aa).

NAD(+) is bound by residues 45–49 (DFDFD), 94–95 (SL), and Glu120. The active-site N6-AMP-lysine intermediate is the Lys122. NAD(+) contacts are provided by Arg143, Glu177, Lys289, and Lys313. Cys403, Cys406, Cys421, and Cys426 together coordinate Zn(2+). Positions 593 to 681 (SDQQPFAGQS…SLKINFKNTI (89 aa)) constitute a BRCT domain.

Belongs to the NAD-dependent DNA ligase family. LigA subfamily. It depends on Mg(2+) as a cofactor. Requires Mn(2+) as cofactor.

The catalysed reaction is NAD(+) + (deoxyribonucleotide)n-3'-hydroxyl + 5'-phospho-(deoxyribonucleotide)m = (deoxyribonucleotide)n+m + AMP + beta-nicotinamide D-nucleotide.. In terms of biological role, DNA ligase that catalyzes the formation of phosphodiester linkages between 5'-phosphoryl and 3'-hydroxyl groups in double-stranded DNA using NAD as a coenzyme and as the energy source for the reaction. It is essential for DNA replication and repair of damaged DNA. The chain is DNA ligase from Leptospira borgpetersenii serovar Hardjo-bovis (strain JB197).